We begin with the raw amino-acid sequence, 232 residues long: Ubiquitin carboxyl-terminal hydrolase UCHL3 (232 aa).

In terms of domain architecture, UCH catalytic spans 6–225 (IWTPLESNPD…LRFSALAVIP (220 aa)). Positions 10–14 (LESNP) are interaction with ubiquitin. Cysteine 92 functions as the Nucleophile in the catalytic mechanism. A crossover loop which restricts access of large ubiquitin adducts to the active site region spans residues 151–159 (QVENRDDIL). The tract at residues 163–165 (THF) is interaction with ubiquitin. Histidine 164 (proton donor) is an active-site residue.

The protein belongs to the peptidase C12 family.

The enzyme catalyses Thiol-dependent hydrolysis of ester, thioester, amide, peptide and isopeptide bonds formed by the C-terminal Gly of ubiquitin (a 76-residue protein attached to proteins as an intracellular targeting signal).. Its function is as follows. Thiol protease that recognizes and hydrolyzes a peptide bond at the C-terminal glycine of either ubiquitin or NEDD8. Essential for parasite blood stage survival. The sequence is that of Ubiquitin carboxyl-terminal hydrolase UCHL3 from Plasmodium falciparum (isolate 3D7).